The primary structure comprises 66 residues: uncharacterized protein (66 aa).

The HTH cro/C1-type domain maps to V5 to V59. The H-T-H motif DNA-binding region spans Q16–K35.

This is an uncharacterized protein from Bacillus subtilis (strain 168).